The primary structure comprises 612 residues: Glutamine--fructose-6-phosphate aminotransferase [isomerizing] (612 aa).

Cysteine 2 (nucleophile; for GATase activity) is an active-site residue. The Glutamine amidotransferase type-2 domain occupies 2–217 (CGIVGGVAER…EGDIARLTRD (216 aa)). 2 consecutive SIS domains span residues 283–428 (AEAD…VKEQ) and 461–602 (LSEL…VDQP). Lysine 607 functions as the For Fru-6P isomerization activity in the catalytic mechanism.

As to quaternary structure, homodimer.

It is found in the cytoplasm. It carries out the reaction D-fructose 6-phosphate + L-glutamine = D-glucosamine 6-phosphate + L-glutamate. In terms of biological role, catalyzes the first step in hexosamine metabolism, converting fructose-6P into glucosamine-6P using glutamine as a nitrogen source. The chain is Glutamine--fructose-6-phosphate aminotransferase [isomerizing] from Acinetobacter baylyi (strain ATCC 33305 / BD413 / ADP1).